We begin with the raw amino-acid sequence, 335 residues long: Teichoic acids export ATP-binding protein TagH (335 aa).

Positions 26-246 (IKGLFMPKSQ…YDEFVKWFNK (221 aa)) constitute an ABC transporter domain. 60-67 (GINGSGKS) is an ATP binding site.

The protein belongs to the ABC transporter superfamily. Teichoic acids exporter (TC 3.A.1.104.1) family. As to quaternary structure, the complex is composed of two ATP-binding proteins (TagH) and two transmembrane proteins (TagG).

The protein localises to the cell membrane. It catalyses the reaction ATP + H2O + teichoic acidSide 1 = ADP + phosphate + teichoic acidSide 2.. Its function is as follows. Part of the ABC transporter complex TagGH involved in teichoic acids export. Responsible for energy coupling to the transport system. This chain is Teichoic acids export ATP-binding protein TagH, found in Listeria monocytogenes serotype 4b (strain F2365).